The following is a 132-amino-acid chain: Protein FasE (132 aa).

The protein is Protein FasE (fasE) of Escherichia coli.